The chain runs to 407 residues: Peptidase T (407 aa).

His-82 is a binding site for Zn(2+). The active site involves Asp-84. A Zn(2+)-binding site is contributed by Asp-143. The active-site Proton acceptor is Glu-177. Zn(2+) is bound by residues Glu-178, Asp-200, and His-382.

The protein belongs to the peptidase M20B family. The cofactor is Zn(2+).

It localises to the cytoplasm. The enzyme catalyses Release of the N-terminal residue from a tripeptide.. Functionally, cleaves the N-terminal amino acid of tripeptides. This Streptococcus pyogenes serotype M49 (strain NZ131) protein is Peptidase T.